Consider the following 338-residue polypeptide: Aspartate-semialdehyde dehydrogenase (338 aa).

NADP(+)-binding positions include 9-12 (TGQV) and 37-38 (RS). R93 provides a ligand contact to phosphate. C123 acts as the Acyl-thioester intermediate in catalysis. Q150 serves as a coordination point for substrate. An NADP(+)-binding site is contributed by 153–154 (SG). K220 is a binding site for phosphate. R242 lines the substrate pocket. H249 serves as the catalytic Proton acceptor. Residue N316 coordinates NADP(+).

This sequence belongs to the aspartate-semialdehyde dehydrogenase family. In terms of assembly, homodimer.

The enzyme catalyses L-aspartate 4-semialdehyde + phosphate + NADP(+) = 4-phospho-L-aspartate + NADPH + H(+). It participates in amino-acid biosynthesis; L-lysine biosynthesis via DAP pathway; (S)-tetrahydrodipicolinate from L-aspartate: step 2/4. Its pathway is amino-acid biosynthesis; L-methionine biosynthesis via de novo pathway; L-homoserine from L-aspartate: step 2/3. It functions in the pathway amino-acid biosynthesis; L-threonine biosynthesis; L-threonine from L-aspartate: step 2/5. Functionally, catalyzes the NADPH-dependent formation of L-aspartate-semialdehyde (L-ASA) by the reductive dephosphorylation of L-aspartyl-4-phosphate. The protein is Aspartate-semialdehyde dehydrogenase of Streptomyces akiyoshiensis.